Consider the following 737-residue polypeptide: Dynein axonemal intermediate chain 7 homolog (737 aa).

Residues 1–15 (MPPKSPNRSGKSTPT) show a composition bias toward polar residues. 3 disordered regions span residues 1–61 (MPPK…ERRA), 274–362 (KKVK…DDEE), and 410–452 (STVK…QQPP). Basic and acidic residues-rich tracts occupy residues 18-61 (RPGE…ERRA), 276-316 (VKDE…EGRQ), and 333-349 (EETK…DAVK). Polar residues-rich tracts occupy residues 417–429 (DNPN…SRVA) and 441–451 (PSKTPLEQQQP).

This sequence belongs to the DNAI7 family.

The sequence is that of Dynein axonemal intermediate chain 7 homolog (AXP83.9) from Ciona intestinalis (Transparent sea squirt).